Consider the following 317-residue polypeptide: Beta-ketoacyl-[acyl-carrier-protein] synthase III (317 aa).

Residues Cys-112 and His-244 contribute to the active site. Residues 245–249 (QANLR) form an ACP-binding region. Residue Asn-274 is part of the active site.

Belongs to the thiolase-like superfamily. FabH family. In terms of assembly, homodimer.

The protein localises to the cytoplasm. It catalyses the reaction malonyl-[ACP] + acetyl-CoA + H(+) = 3-oxobutanoyl-[ACP] + CO2 + CoA. The protein operates within lipid metabolism; fatty acid biosynthesis. In terms of biological role, catalyzes the condensation reaction of fatty acid synthesis by the addition to an acyl acceptor of two carbons from malonyl-ACP. Catalyzes the first condensation reaction which initiates fatty acid synthesis and may therefore play a role in governing the total rate of fatty acid production. Possesses both acetoacetyl-ACP synthase and acetyl transacylase activities. Its substrate specificity determines the biosynthesis of branched-chain and/or straight-chain of fatty acids. The chain is Beta-ketoacyl-[acyl-carrier-protein] synthase III from Pasteurella multocida (strain Pm70).